A 196-amino-acid chain; its full sequence is Elongation factor Ts (196 aa).

The tract at residues T80–V83 is involved in Mg(2+) ion dislocation from EF-Tu.

It belongs to the EF-Ts family. As to quaternary structure, heterotetramer composed of two EF-Ts.EF-Tu dimer complexes.

It localises to the cytoplasm. Its function is as follows. Associates with the EF-Tu.GDP complex and induces the exchange of GDP to GTP. It remains bound to the aminoacyl-tRNA.EF-Tu.GTP complex up to the GTP hydrolysis stage on the ribosome. This Thermus thermophilus (strain ATCC 27634 / DSM 579 / HB8) protein is Elongation factor Ts (tsf).